Consider the following 250-residue polypeptide: Cell division protein ZapD (250 aa).

Belongs to the ZapD family. In terms of assembly, interacts with FtsZ.

Its subcellular location is the cytoplasm. Cell division factor that enhances FtsZ-ring assembly. Directly interacts with FtsZ and promotes bundling of FtsZ protofilaments, with a reduction in FtsZ GTPase activity. This Yersinia enterocolitica serotype O:8 / biotype 1B (strain NCTC 13174 / 8081) protein is Cell division protein ZapD.